The sequence spans 511 residues: 2,3-bisphosphoglycerate-independent phosphoglycerate mutase (511 aa).

Residue D12 participates in Mn(2+) binding. Y36 bears the Phosphotyrosine mark. S62 contributes to the Mn(2+) binding site. S62 acts as the Phosphoserine intermediate in catalysis. Residues H123, 153–154, R185, R191, 261–264, and K336 each bind substrate; these read RD and RPDR. Mn(2+) is bound by residues D403, H407, D444, H445, and H462.

It belongs to the BPG-independent phosphoglycerate mutase family. As to quaternary structure, monomer. Mn(2+) serves as cofactor.

It carries out the reaction (2R)-2-phosphoglycerate = (2R)-3-phosphoglycerate. It participates in carbohydrate degradation; glycolysis; pyruvate from D-glyceraldehyde 3-phosphate: step 3/5. Functionally, essential for rapid growth and for sporulation. Catalyzes the interconversion of 2-phosphoglycerate and 3-phosphoglycerate. This Bacillus velezensis (strain DSM 23117 / BGSC 10A6 / LMG 26770 / FZB42) (Bacillus amyloliquefaciens subsp. plantarum) protein is 2,3-bisphosphoglycerate-independent phosphoglycerate mutase.